The sequence spans 143 residues: MSLQPFFGFPPTVNDLFSDFVSYSPRLNNQIPGELSPSIDVHEGKDTVSVDVELPGVKKEDVQVHYDSGKLTISGEVVNERKNESTEGNQRWSERRFGSFSRTITIPAKIDADRIEANFSNGLLTVTLPKVEKSQTKKQIAIK.

The sHSP domain maps to 30–143 (QIPGELSPSI…SQTKKQIAIK (114 aa)).

It belongs to the small heat shock protein (HSP20) family.

It is found in the cytoplasm. The protein localises to the nucleus. In Schizosaccharomyces pombe (strain 972 / ATCC 24843) (Fission yeast), this protein is Heat shock protein 16 (hsp16).